The following is a 159-amino-acid chain: Ribosomal RNA large subunit methyltransferase H (159 aa).

S-adenosyl-L-methionine contacts are provided by residues Leu76, Gly108, and 127-132; that span reads FGLLTL.

Belongs to the RNA methyltransferase RlmH family. As to quaternary structure, homodimer.

Its subcellular location is the cytoplasm. It catalyses the reaction pseudouridine(1915) in 23S rRNA + S-adenosyl-L-methionine = N(3)-methylpseudouridine(1915) in 23S rRNA + S-adenosyl-L-homocysteine + H(+). In terms of biological role, specifically methylates the pseudouridine at position 1915 (m3Psi1915) in 23S rRNA. The sequence is that of Ribosomal RNA large subunit methyltransferase H from Streptococcus pyogenes serotype M6 (strain ATCC BAA-946 / MGAS10394).